The sequence spans 102 residues: Phosphoribosyl-ATP pyrophosphatase (102 aa).

It belongs to the PRA-PH family.

It is found in the cytoplasm. The enzyme catalyses 1-(5-phospho-beta-D-ribosyl)-ATP + H2O = 1-(5-phospho-beta-D-ribosyl)-5'-AMP + diphosphate + H(+). The protein operates within amino-acid biosynthesis; L-histidine biosynthesis; L-histidine from 5-phospho-alpha-D-ribose 1-diphosphate: step 2/9. The chain is Phosphoribosyl-ATP pyrophosphatase from Dinoroseobacter shibae (strain DSM 16493 / NCIMB 14021 / DFL 12).